The chain runs to 295 residues: F-box only protein 8 (295 aa).

The F-box domain maps to 35 to 80 (TWVARYIPQDLLIEILTRLPPKSVMRFKCVSKFWSSLLSSRYFCNR).

This is F-box only protein 8 (FBX8) from Arabidopsis thaliana (Mouse-ear cress).